The following is a 471-amino-acid chain: Uronate isomerase (471 aa).

This sequence belongs to the metallo-dependent hydrolases superfamily. Uronate isomerase family.

The enzyme catalyses D-glucuronate = D-fructuronate. It carries out the reaction aldehydo-D-galacturonate = keto-D-tagaturonate. It participates in carbohydrate metabolism; pentose and glucuronate interconversion. This chain is Uronate isomerase, found in Xanthomonas campestris pv. campestris (strain 8004).